Consider the following 91-residue polypeptide: Large ribosomal subunit protein uL22 (91 aa).

The protein belongs to the universal ribosomal protein uL22 family. In terms of assembly, part of the 50S ribosomal subunit.

Its function is as follows. This protein binds specifically to 23S rRNA; its binding is stimulated by other ribosomal proteins, e.g. L4, L17, and L20. It is important during the early stages of 50S assembly. It makes multiple contacts with different domains of the 23S rRNA in the assembled 50S subunit and ribosome. In terms of biological role, the globular domain of the protein is located near the polypeptide exit tunnel on the outside of the subunit, while an extended beta-hairpin is found that lines the wall of the exit tunnel in the center of the 70S ribosome. This Clover yellow edge phytoplasma protein is Large ribosomal subunit protein uL22 (rplV).